A 431-amino-acid polypeptide reads, in one-letter code: Protein PIN-LIKES 6 (431 aa).

Topologically, residues 1 to 29 are lumenal; sequence MIARILAALADSMEMPVAAGGGSVLGTIK. The helical transmembrane segment at 30-50 threads the bilayer; the sequence is IAVMPIAKVFTMCFLGLLMAS. At 51-66 the chain is on the cytoplasmic side; sequence KYVNILPPSGRKLLNG. Residues 67 to 87 form a helical membrane-spanning segment; the sequence is LVFSLLLPCLIFSQLGQAVTL. Topologically, residues 88 to 93 are lumenal; that stretch reads QKMLQW. Residues 94–114 traverse the membrane as a helical segment; sequence WFIPVNVVLGTISGSIIGFIV. The Cytoplasmic portion of the chain corresponds to 115 to 128; it reads ASIVRPPYPYFKFT. Residues 129–149 traverse the membrane as a helical segment; it reads IIQIGVGNIGNVPLVLLAALC. At 150-169 the chain is on the lumenal side; sequence RDTSNPFGDSEKCSIDGTAY. Residues 170–190 traverse the membrane as a helical segment; that stretch reads ISFGQWVGAIILYTYVYQMFA. Residues 191 to 268 lie on the Cytoplasmic side of the membrane; it reads PPPEGFDAEE…FLYEKLKLKQ (78 aa). Residues 269-289 form a helical membrane-spanning segment; sequence IVQPAIVASILAMILGAIPFT. Over 290–306 the chain is Lumenal; sequence KKLIFTNGAPLFFFTDS. Residues 307–327 form a helical membrane-spanning segment; that stretch reads CMILGDAMIPCILLALGGNLI. At 328–340 the chain is on the cytoplasmic side; sequence NGPGSSKLGFKTT. Residues 341-361 traverse the membrane as a helical segment; that stretch reads AAIIIGRLVLVPPVGLGIVTV. Residues 362–376 lie on the Lumenal side of the membrane; it reads ADKLGFLPADDKMFR. Residues 377–397 traverse the membrane as a helical segment; it reads FVLLLQHTMPTSVLSGAVANL. At 398–406 the chain is on the cytoplasmic side; the sequence is RGCGRESAA. Residues 407–427 form a helical membrane-spanning segment; it reads VLFWVHIFAIFSMAGWMVLYI. Residues 428–431 are Lumenal-facing; it reads NILF.

It belongs to the auxin efflux carrier (TC 2.A.69.2) family. In terms of tissue distribution, expressed in seedlings, rosette and cauline leaves, stems and flowers.

The protein localises to the endoplasmic reticulum membrane. Functionally, involved in cellular auxin homeostasis by regulating auxin metabolism. Regulates intracellular auxin accumulation at the endoplasmic reticulum and thus auxin availability for nuclear auxin signaling. The protein is Protein PIN-LIKES 6 of Arabidopsis thaliana (Mouse-ear cress).